Reading from the N-terminus, the 1106-residue chain is Voltage-dependent calcium channel subunit alpha-2/delta-1 (1106 aa).

The N-terminal stretch at 1–26 is a signal peptide; the sequence is MAAGRPLAWTLTLWQAWLILIGPSSE. The Extracellular segment spans residues 27–1076; it reads EPFPSAVTIK…VLEDYTDCGG (1050 aa). A glycan (N-linked (GlcNAc...) asparagine) is linked at asparagine 94. A Phosphoserine modification is found at serine 121. Residues asparagine 138 and asparagine 186 are each glycosylated (N-linked (GlcNAc...) asparagine). The 178-residue stretch at 255-432 folds into the VWFA domain; it reads DMLILVDVSG…INTQEYLDVL (178 aa). A divalent metal cation contacts are provided by aspartate 261, serine 263, and serine 265. Positions 261–265 match the MIDAS-like motif motif; the sequence is DVSGS. 2 N-linked (GlcNAc...) asparagine glycosylation sites follow: asparagine 326 and asparagine 350. Cysteine 406 and cysteine 1062 are disulfide-bonded. Residues 448–539 enclose the Cache domain; the sequence is WTNVYLDALE…QPKPIGVGIP (92 aa). 3 N-linked (GlcNAc...) asparagine glycosylation sites follow: asparagine 615, asparagine 784, and asparagine 891. Residues 1077–1097 traverse the membrane as a helical segment; that stretch reads VSGLNPSLWSIIGIQFVLLWL. The Cytoplasmic portion of the chain corresponds to 1098 to 1106; the sequence is VSGSRHCLL.

Belongs to the calcium channel subunit alpha-2/delta family. Dimer formed of alpha-2-1 and delta-1 chains; disulfide-linked. Voltage-dependent calcium channels are multisubunit complexes, consisting of alpha-1 (CACNA1), alpha-2 (CACNA2D), beta (CACNB) and delta (CACNA2D) subunits in a 1:1:1:1 ratio. In terms of processing, proteolytically processed into subunits alpha-2-1 and delta-1 that are disulfide-linked. As to expression, skeletal muscle.

It localises to the membrane. It is found in the cell membrane. In terms of biological role, the alpha-2/delta subunit of voltage-dependent calcium channels regulates calcium current density and activation/inactivation kinetics of the calcium channel. Plays an important role in excitation-contraction coupling. The chain is Voltage-dependent calcium channel subunit alpha-2/delta-1 (CACNA2D1) from Oryctolagus cuniculus (Rabbit).